The primary structure comprises 139 residues: Large ribosomal subunit protein eL32 (139 aa).

This sequence belongs to the eukaryotic ribosomal protein eL32 family.

In Encephalitozoon cuniculi (strain GB-M1) (Microsporidian parasite), this protein is Large ribosomal subunit protein eL32 (RPL32).